Consider the following 441-residue polypeptide: Nuclear distribution protein nudF (441 aa).

The LisH domain maps to 9–41 (QAEELHKSIIAYLASVNLTESSAALRAELGDSV). WD repeat units follow at residues 87 to 128 (GHRE…RTVK), 130 to 170 (HTKA…KNIR), 174 to 221 (GHDH…CVKT), 224 to 263 (GHVD…TKST), 266 to 326 (GHEH…IKTL), 328 to 367 (GHDN…KCVR), 372 to 402 (AHGH…NGAP), and 403 to 440 (AATA…RIFA). Residues 390–415 (GGANGESETNGAPAATATTNGVRPDP) are disordered. Residues 398-410 (TNGAPAATATTNG) are compositionally biased toward low complexity.

Belongs to the WD repeat LIS1/nudF family. As to quaternary structure, self-associates. Interacts with nudE and dynein.

The protein localises to the cytoplasm. Its subcellular location is the cytoskeleton. It localises to the spindle pole. Functionally, positively regulates the activity of the minus-end directed microtubule motor protein dynein. May enhance dynein-mediated microtubule sliding by targeting dynein to the microtubule plus end. Required for nuclear migration during vegetative growth as well as development. Required for retrograde early endosome (EE) transport from the hyphal tip. Required for localization of dynein to the mitotic spindle poles. Recruits additional proteins to the dynein complex at SPBs. This is Nuclear distribution protein nudF from Neosartorya fischeri (strain ATCC 1020 / DSM 3700 / CBS 544.65 / FGSC A1164 / JCM 1740 / NRRL 181 / WB 181) (Aspergillus fischerianus).